The following is a 243-amino-acid chain: Cell division protein ZipA (243 aa).

The Periplasmic portion of the chain corresponds to 1–4; it reads MSDM. The helical transmembrane segment at 5–25 threads the bilayer; the sequence is AMIRIGILIAGLLLVAAIFLF. Topologically, residues 26-243 are cytoplasmic; sequence GRPKKSPQGR…APPLTKSPRW (218 aa). The interval 30 to 89 is disordered; that stretch reads KSPQGRRVDKGEGQPRERREPVISSEFGAEGDAAERAEGVEQSELNLEGQDASGGNEVGK. Residues 35–50 show a composition bias toward basic and acidic residues; sequence RRVDKGEGQPRERREP.

This sequence belongs to the ZipA family. As to quaternary structure, interacts with FtsZ via their C-terminal domains.

It localises to the cell inner membrane. Functionally, essential cell division protein that stabilizes the FtsZ protofilaments by cross-linking them and that serves as a cytoplasmic membrane anchor for the Z ring. Also required for the recruitment to the septal ring of downstream cell division proteins. The protein is Cell division protein ZipA of Xanthomonas axonopodis pv. citri (strain 306).